We begin with the raw amino-acid sequence, 325 residues long: Diaminopimelate epimerase (325 aa).

Substrate-binding residues include Asn-11 and Asn-69. The Proton donor role is filled by Cys-78. Substrate-binding positions include 79 to 80 (GN), Asn-166, Asn-203, and 221 to 222 (ER). The active-site Proton acceptor is the Cys-230. 231-232 (GT) provides a ligand contact to substrate.

It belongs to the diaminopimelate epimerase family. Homodimer.

The protein resides in the cytoplasm. The catalysed reaction is (2S,6S)-2,6-diaminopimelate = meso-2,6-diaminopimelate. It participates in amino-acid biosynthesis; L-lysine biosynthesis via DAP pathway; DL-2,6-diaminopimelate from LL-2,6-diaminopimelate: step 1/1. In terms of biological role, catalyzes the stereoinversion of LL-2,6-diaminopimelate (L,L-DAP) to meso-diaminopimelate (meso-DAP), a precursor of L-lysine and an essential component of the bacterial peptidoglycan. In Ligilactobacillus salivarius (strain UCC118) (Lactobacillus salivarius), this protein is Diaminopimelate epimerase.